A 219-amino-acid polypeptide reads, in one-letter code: MCPARSLLLVATLVLLDYLSLARNLSVATPGPEMFPCLHHSQNLLKAASNTLQKARQILEFYPCTSEEIDHEDITKDKTSTVEACLPLELIKNESCLNSRETSVITKGSCLASRKTSFMMALCLRSIYEDLQIYQVEFKTMNAKLLMDPKRQIFLDQNILGVIDELMQALNFNSETVPQKSSLEEPDFYKTKIRLCILLHAFRIRAVTIDRVMSYLNAS.

The first 22 residues, 1–22 (MCPARSLLLVATLVLLDYLSLA), serve as a signal peptide directing secretion. N-linked (GlcNAc...) asparagine glycans are attached at residues asparagine 24 and asparagine 93. Disulfide bonds link cysteine 37-cysteine 110, cysteine 64-cysteine 196, and cysteine 85-cysteine 123.

Belongs to the IL-6 superfamily. Heterodimer with IL12B; disulfide-linked. This heterodimer is known as interleukin IL-12. Heterodimer with EBI3/IL27B; not disulfide-linked. This heterodimer is known as interleukin IL-35. Interacts with NBR1; this interaction promotes IL-12 secretion.

It localises to the secreted. Heterodimerizes with IL12B to form the IL-12 cytokine or with EBI3/IL27B to form the IL-35 cytokine. IL-12 is primarily produced by professional antigen-presenting cells (APCs) such as B-cells and dendritic cells (DCs) as well as macrophages and granulocytes and regulates T-cell and natural killer-cell responses, induces the production of interferon-gamma (IFN-gamma), favors the differentiation of T-helper 1 (Th1) cells and is an important link between innate resistance and adaptive immunity. Mechanistically, exerts its biological effects through a receptor composed of IL12R1 and IL12R2 subunits. Binding to the receptor results in the rapid tyrosine phosphorylation of a number of cellular substrates including the JAK family kinases TYK2 and JAK2. In turn, recruited STAT4 gets phosphorylated and translocates to the nucleus where it regulates cytokine/growth factor responsive genes. As part of IL-35, plays essential roles in maintaining the immune homeostasis of the liver microenvironment and also functions as an immune-suppressive cytokine. Mediates biological events through unconventional receptors composed of IL12RB2 and gp130/IL6ST heterodimers or homodimers. Signaling requires the transcription factors STAT1 and STAT4, which form a unique heterodimer that binds to distinct DNA sites. This Papio anubis (Olive baboon) protein is Interleukin-12 subunit alpha (IL12A).